We begin with the raw amino-acid sequence, 148 residues long: D-aminoacyl-tRNA deacylase (148 aa).

The short motif at G137–P138 is the Gly-cisPro motif, important for rejection of L-amino acids element.

The protein belongs to the DTD family. Homodimer.

The protein resides in the cytoplasm. It catalyses the reaction glycyl-tRNA(Ala) + H2O = tRNA(Ala) + glycine + H(+). The catalysed reaction is a D-aminoacyl-tRNA + H2O = a tRNA + a D-alpha-amino acid + H(+). Its function is as follows. An aminoacyl-tRNA editing enzyme that deacylates mischarged D-aminoacyl-tRNAs. Also deacylates mischarged glycyl-tRNA(Ala), protecting cells against glycine mischarging by AlaRS. Acts via tRNA-based rather than protein-based catalysis; rejects L-amino acids rather than detecting D-amino acids in the active site. By recycling D-aminoacyl-tRNA to D-amino acids and free tRNA molecules, this enzyme counteracts the toxicity associated with the formation of D-aminoacyl-tRNA entities in vivo and helps enforce protein L-homochirality. This chain is D-aminoacyl-tRNA deacylase, found in Deinococcus geothermalis (strain DSM 11300 / CIP 105573 / AG-3a).